The chain runs to 418 residues: Putative ion-transport protein YfeO (418 aa).

12 helical membrane passes run 10-30, 54-74, 99-119, 120-140, 149-169, 186-206, 223-243, 258-278, 300-320, 322-342, 343-363, and 371-391; these read LLLSLPAVAIGIASSLILIVV, DSPLWIIGVLTLTGIAVGLVI, ALPGLIVALILGLAGGVSLGP, EHPIMTVNIALAVAIGARLLP, ILASAGTIGALFGTPVAAALI, LFAPLMAAAAGALTTGLFFHP, ILSGAIVAAIAIAAGMVAVWC, VLVLGIGGFILGILGVIGGPV, DYFLLAVIKLAALVVAAASGF, GGRIFPAVFVGVALGLMLHEH, VPAVPAAITVSCAILGIVLVV, and LFMAAVVVPNTTLLPLLCIVM.

It belongs to the chloride channel (TC 2.A.49) family.

The protein localises to the cell membrane. The chain is Putative ion-transport protein YfeO from Shigella boydii serotype 18 (strain CDC 3083-94 / BS512).